The chain runs to 111 residues: uncharacterized protein (111 aa).

2 helical membrane passes run 7–27 (ILNIILALAVPIGLLFISMMI) and 53–73 (AFAMFIPLLIIALTLLVTFLH).

The protein localises to the cell membrane. This is an uncharacterized protein from Bacillus anthracis.